The following is a 1250-amino-acid chain: Immunoglobulin superfamily DCC subclass member 4 (1250 aa).

Positions 1–24 are cleaved as a signal peptide; it reads MARGDAGRGRGLLALTFCLLAARG. Residues 25–957 are Extracellular-facing; the sequence is ELLLPQETTV…SDSLDMHSVT (933 aa). 4 consecutive Ig-like C2-type domains span residues 29-137, 143-229, 242-330, and 335-421; these read PQET…TAVV, ADFS…ALLS, QDVV…AELR, and PAIT…ASLA. Cys-57 and Cys-121 form a disulfide bridge. Residues Asn-90, Asn-102, and Asn-157 are each glycosylated (N-linked (GlcNAc...) asparagine). Cys-164 and Cys-212 are disulfide-bonded. N-linked (GlcNAc...) asparagine glycosylation is present at Asn-252. 2 cysteine pairs are disulfide-bonded: Cys-265/Cys-312 and Cys-356/Cys-405. 5 consecutive Fibronectin type-III domains span residues 431–525, 527–623, 632–741, 752–845, and 850–945; these read APTR…TLDD, PSAA…TPSM, APAE…APAP, PPAH…TLPD, and PPSD…TLQE. Residue Asn-582 is glycosylated (N-linked (GlcNAc...) asparagine). Residues 958–978 traverse the membrane as a helical segment; that stretch reads GIIVGVCLGLLCLLACMCAGL. Residues 979–1250 are Cytoplasmic-facing; sequence RRSPHRESLP…LPRSPVSSSA (272 aa). A Phosphothreonine modification is found at Thr-995. Disordered stretches follow at residues 1140–1175 and 1215–1250; these read SASN…DPGQ and PGEV…SSSA.

Belongs to the immunoglobulin superfamily. DCC family.

It localises to the cell membrane. This is Immunoglobulin superfamily DCC subclass member 4 (IGDCC4) from Homo sapiens (Human).